The following is a 76-amino-acid chain: Acyl carrier protein (76 aa).

Positions 1–76 (MSLEEKVKNI…DVIEYIKAHT (76 aa)) constitute a Carrier domain. Serine 36 is modified (O-(pantetheine 4'-phosphoryl)serine).

The protein belongs to the acyl carrier protein (ACP) family. In terms of processing, 4'-phosphopantetheine is transferred from CoA to a specific serine of apo-ACP by AcpS. This modification is essential for activity because fatty acids are bound in thioester linkage to the sulfhydryl of the prosthetic group.

The protein resides in the cytoplasm. It participates in lipid metabolism; fatty acid biosynthesis. In terms of biological role, carrier of the growing fatty acid chain in fatty acid biosynthesis. The sequence is that of Acyl carrier protein from Desulfatibacillum aliphaticivorans.